A 179-amino-acid polypeptide reads, in one-letter code: Probable protein archease (179 aa).

Ca(2+)-binding residues include Asp-55, Asp-178, and Val-179.

The protein belongs to the archease family.

In terms of biological role, activates the tRNA-splicing ligase complex by facilitating the enzymatic turnover of catalytic subunit RtcB. Acts by promoting the guanylylation of RtcB, a key intermediate step in tRNA ligation. Can also alter the NTP specificity of RtcB such that ATP, dGTP or ITP is used efficiently. In Mycobacterium tuberculosis (strain CDC 1551 / Oshkosh), this protein is Probable protein archease.